Here is a 386-residue protein sequence, read N- to C-terminus: Ribonuclease D (386 aa).

The 3'-5' exonuclease domain occupies 3-174 (HTITTTDELA…EIYEYLSAEL (172 aa)). Residues 213–294 (SGRVVAIAQQ…ARGMSVPNSE (82 aa)) form the HRDC domain.

Belongs to the RNase D family. It depends on a divalent metal cation as a cofactor.

It is found in the cytoplasm. It carries out the reaction Exonucleolytic cleavage that removes extra residues from the 3'-terminus of tRNA to produce 5'-mononucleotides.. Its function is as follows. Exonuclease involved in the 3' processing of various precursor tRNAs. Initiates hydrolysis at the 3'-terminus of an RNA molecule and releases 5'-mononucleotides. The chain is Ribonuclease D from Jannaschia sp. (strain CCS1).